Consider the following 215-residue polypeptide: Nascent polypeptide-associated complex subunit alpha (215 aa).

The tract at residues 1 to 81 (MPGEATETVP…SEKKARKAMS (81 aa)) is disordered. The segment covering 9 to 28 (VPATEQELPQPQAETGSGTE) has biased composition (polar residues). Residues 29 to 42 (SDSDESVPELEEQD) show a composition bias toward acidic residues. Phosphoserine; by ILK1 is present on Ser43. Residues 44–57 (TQTATQQAQLAAAA) are compositionally biased toward low complexity. The interval 69 to 80 (QSRSEKKARKAM) is required for DNA-binding. Positions 70–135 (SRSEKKARKA…AKIEDLSQQA (66 aa)) constitute an NAC-A/B domain. The segment at 93-108 (RVTIRKSKNILFVITK) is RNA/DNA-binding. Phosphoserine is present on Ser132. At Lys142 the chain carries N6-acetyllysine; alternate. Lys142 is covalently cross-linked (Glycyl lysine isopeptide (Lys-Gly) (interchain with G-Cter in SUMO2); alternate). Thr159 bears the Phosphothreonine; by GSK3-beta mark. A Phosphothreonine modification is found at Thr161. Phosphoserine occurs at positions 166, 186, 191, and 203. One can recognise a UBA domain in the interval 176-213 (VEVKDIELVMSQANVSRAKAVRALKNNSNDIVNAIMEL).

It belongs to the NAC-alpha family. Part of the nascent polypeptide-associated complex (NAC), which is a heterodimer of NACA and BTF3 (via NAC-A/B domains). NAC associates with ribosomes through the BTF3/NACB subunit and contacts the ribosomal protein L23, which is positioned near the exiting site. Both subunits can contact nascent polypeptide chains. NACA may also form homodimers, and only this form binds DNA. Interacts with TBP and JUN. Post-translationally, phosphorylation of Ser-43 by ILK during cell adhesion may promote nuclear localization. Phosphorylation of Thr-159 by GSK3B may promote proteasome mediated degradation. Isoform 1 appears to be ubiquitously expressed.

The protein localises to the cytoplasm. It is found in the nucleus. Prevents inappropriate targeting of non-secretory polypeptides to the endoplasmic reticulum (ER). Binds to nascent polypeptide chains as they emerge from the ribosome and blocks their interaction with the signal recognition particle (SRP), which normally targets nascent secretory peptides to the ER. Also reduces the inherent affinity of ribosomes for protein translocation sites in the ER membrane (M sites). Isoform 1 and isoform 2 appear to bind DNA and play roles in transcription. Isoform 1 may function as a specific coactivator for JUN, acting to stabilize the interaction of JUN homodimers with promoter elements. The polypeptide is Nascent polypeptide-associated complex subunit alpha (Naca) (Mus musculus (Mouse)).